The following is a 507-amino-acid chain: ATP synthase subunit alpha, chloroplastic (507 aa).

170–177 contacts ATP; sequence GDRQTGKT.

It belongs to the ATPase alpha/beta chains family. As to quaternary structure, F-type ATPases have 2 components, CF(1) - the catalytic core - and CF(0) - the membrane proton channel. CF(1) has five subunits: alpha(3), beta(3), gamma(1), delta(1), epsilon(1). CF(0) has four main subunits: a, b, b' and c.

The protein resides in the plastid. The protein localises to the chloroplast thylakoid membrane. It catalyses the reaction ATP + H2O + 4 H(+)(in) = ADP + phosphate + 5 H(+)(out). In terms of biological role, produces ATP from ADP in the presence of a proton gradient across the membrane. The alpha chain is a regulatory subunit. This chain is ATP synthase subunit alpha, chloroplastic, found in Citrus sinensis (Sweet orange).